We begin with the raw amino-acid sequence, 241 residues long: Chloride intracellular channel protein 1 (241 aa).

An N-acetylalanine modification is found at A2. The tract at residues A2–P90 is required for insertion into the membrane. K13 carries the post-translational modification N6-acetyllysine. C24 is a glutathione binding site. The residue at position 24 (C24) is an S-glutathionyl cysteine; alternate. The G-site signature appears at C24–S27. C24 and C59 are oxidised to a cystine. Residues F26–V46 form a helical membrane-spanning segment. The glutathione site is built by L64 and T77. A GST C-terminal domain is found at Y93 to Y233. Residue K119 is modified to N6-acetyllysine. Residue S121 is modified to Phosphoserine. Residue K131 is modified to N6-acetyllysine. Phosphoserine is present on residues S156 and S211. Y233 is modified (phosphotyrosine).

The protein belongs to the chloride channel CLIC family. Monomer. Homodimer (in vitro). Interacts with TRAPPC2. Dimerization requires a conformation change that leads to the exposure of a large hydrophobic surface. In vivo, this may lead to membrane insertion. Interacts with AKAP9. In terms of processing, hydrogen peroxide treatment causes a conformation change, leading to dimerization and formation of an intramolecular disulfide bond between Cys-24 and Cys-59. As to expression, expression is prominent in heart, placenta, liver, kidney and pancreas.

The protein localises to the nucleus. It localises to the nucleus membrane. The protein resides in the cytoplasm. Its subcellular location is the cell membrane. It is found in the endoplasmic reticulum. The catalysed reaction is L-dehydroascorbate + 2 glutathione = glutathione disulfide + L-ascorbate. It carries out the reaction chloride(in) = chloride(out). It catalyses the reaction iodide(out) = iodide(in). The enzyme catalyses thiocyanate(in) = thiocyanate(out). The catalysed reaction is nitrate(in) = nitrate(out). It carries out the reaction bromide(in) = bromide(out). It catalyses the reaction fluoride(in) = fluoride(out). Its activity is regulated as follows. The oxidoreductase activity is inhibited by rapamycin, amphotericin B and IAA-94. The channel conductance is regulated by pH and redox membrane potential. Inhibited by IAA-94. Its function is as follows. In the soluble state, catalyzes glutaredoxin-like thiol disulfide exchange reactions with reduced glutathione as electron donor. Reduces selenite and dehydroascorbate and may act as an antioxidant during oxidative stress response. Can insert into membranes and form voltage-dependent multi-ion conductive channels. Membrane insertion seems to be redox-regulated and may occur only under oxidizing conditions. Involved in regulation of the cell cycle. The polypeptide is Chloride intracellular channel protein 1 (Homo sapiens (Human)).